Here is a 427-residue protein sequence, read N- to C-terminus: MTAIVDIIGREILDSRGNPTVEVDVVLEDGSVGRAAVPSGASTGAHEAVELRDGDKHRYLGKGVLKAVEAINDEIYEALSDMSVQDQVQIDQILIELDGTPNKSRIGANAILGVSLACAKAAAISYDMPLYRYVGGTSARTLPVPMMNIVNGGVHADNPIDFQEFMIMPVGAPSFAEALRCGSEIFHTLKGELKKAGHNTNVGDEGGFAPNLPSADAALDFVMSAIGKAGYNAGEDVMLALDCAATEFFRDGKYVYEGENKSRSRSEQARYLADLVARYPIVSIEDGMSEDDMDGWKELTDLIGSKCQLVGDDLFVTNVNRLADGIRNGRANSILIKVNQIGTLTETLAAVEMAYKAGYTAVMSHRSGETEDSTIADLAVATNCGQIKTGSLARADRTAKYNQLLRIEQELDAQARYAGRSALKALA.

(2R)-2-phosphoglycerate is bound at residue Q163. E205 acts as the Proton donor in catalysis. Positions 242, 285, and 312 each coordinate Mg(2+). Residues K337, R366, S367, and K388 each contribute to the (2R)-2-phosphoglycerate site. K337 (proton acceptor) is an active-site residue.

It belongs to the enolase family. It depends on Mg(2+) as a cofactor.

It is found in the cytoplasm. It localises to the secreted. Its subcellular location is the cell surface. It carries out the reaction (2R)-2-phosphoglycerate = phosphoenolpyruvate + H2O. The protein operates within carbohydrate degradation; glycolysis; pyruvate from D-glyceraldehyde 3-phosphate: step 4/5. Its function is as follows. Catalyzes the reversible conversion of 2-phosphoglycerate (2-PG) into phosphoenolpyruvate (PEP). It is essential for the degradation of carbohydrates via glycolysis. The polypeptide is Enolase (Bradyrhizobium sp. (strain BTAi1 / ATCC BAA-1182)).